We begin with the raw amino-acid sequence, 432 residues long: MRVLILGSGVVGTVSAYYLAREGFEVVVVDRQDGPAMETSFANAGQVSPGYASPWSAPGVPLKAIRWMLQQHAPLAIKPTSSLDQYRWMIQMLRNCNPASYAVNKERMVRISEYSRDCLDELRAETGISYEARQLGTTQLFRTQAQVDNAAKDIAILKQSGVPFELLDRDGIAKAEPALASVRDKLAGALRLPNDQTGDCQMFTRKLAKMAEELGVEFRFGCNIDRLECSGDTISGVWIDGKLEVADQYVLALGSYSPHMLKPLGIQAPIYPLKGYSLTIPITDASMAPSSTILDETYKVAITRFDDRIRVGGMAEIAGFDLSLNARRRDTLELVVGDLYPKGGDLTKATFWTGLRPATPDGTPIVGKTKYRNLFLNTGHGTLGWTMSCGSGRLLADLMAGKKPKISAKGLDISRYSNQKEAHNHGNPATAL.

3-17 (VLILGSGVVGTVSAY) serves as a coordination point for FAD.

Belongs to the DadA oxidoreductase family. FAD is required as a cofactor.

It catalyses the reaction a D-alpha-amino acid + A + H2O = a 2-oxocarboxylate + AH2 + NH4(+). Functionally, oxidative deamination of D-amino acids. This is D-amino acid dehydrogenase 1 (dadA1) from Pseudomonas putida (strain ATCC 47054 / DSM 6125 / CFBP 8728 / NCIMB 11950 / KT2440).